The chain runs to 326 residues: Beta-ketoacyl-[acyl-carrier-protein] synthase III (326 aa).

Residues cysteine 112 and histidine 251 contribute to the active site. The ACP-binding stretch occupies residues 252 to 256 (QANSR). The active site involves asparagine 281.

This sequence belongs to the thiolase-like superfamily. FabH family. Homodimer.

It is found in the cytoplasm. The enzyme catalyses malonyl-[ACP] + acetyl-CoA + H(+) = 3-oxobutanoyl-[ACP] + CO2 + CoA. The protein operates within lipid metabolism; fatty acid biosynthesis. Its function is as follows. Catalyzes the condensation reaction of fatty acid synthesis by the addition to an acyl acceptor of two carbons from malonyl-ACP. Catalyzes the first condensation reaction which initiates fatty acid synthesis and may therefore play a role in governing the total rate of fatty acid production. Possesses both acetoacetyl-ACP synthase and acetyl transacylase activities. Its substrate specificity determines the biosynthesis of branched-chain and/or straight-chain of fatty acids. This Clostridium botulinum (strain 657 / Type Ba4) protein is Beta-ketoacyl-[acyl-carrier-protein] synthase III.